Here is a 177-residue protein sequence, read N- to C-terminus: O-acetyl-ADP-ribose deacetylase (177 aa).

A Macro domain is found at 1-175 (MKTRIHVVQG…LYERLLTQQG (175 aa)). Residues 11-12 (DI), Asn-25, 33-35 (GVD), and 122-126 (STGVY) contribute to the substrate site. Residue Asp-35 is the Proton acceptor of the active site.

This sequence belongs to the MacroD-type family. YmdB subfamily. As to quaternary structure, homodimer. Interacts with RNase III.

It carries out the reaction 3''-O-acetyl-ADP-D-ribose + H2O = ADP-D-ribose + acetate + H(+). It catalyses the reaction 2''-O-acetyl-ADP-D-ribose + H2O = ADP-D-ribose + acetate + H(+). Its function is as follows. Deacetylates O-acetyl-ADP ribose to yield ADP-ribose and free acetate. Down-regulates ribonuclease 3 (RNase III) activity. Acts by interacting directly with the region of the ribonuclease that is required for dimerization/activation. This is O-acetyl-ADP-ribose deacetylase from Shigella flexneri serotype 5b (strain 8401).